The sequence spans 105 residues: Met repressor (105 aa).

Belongs to the MetJ family. Homodimer.

Its subcellular location is the cytoplasm. Functionally, this regulatory protein, when combined with SAM (S-adenosylmethionine) represses the expression of the methionine regulon and of enzymes involved in SAM synthesis. The chain is Met repressor from Actinobacillus succinogenes (strain ATCC 55618 / DSM 22257 / CCUG 43843 / 130Z).